The primary structure comprises 600 residues: tRNA uridine 5-carboxymethylaminomethyl modification enzyme MnmG (600 aa).

Residue glycine 10–glycine 15 coordinates FAD. The disordered stretch occupies residues alanine 216–threonine 239. NAD(+) is bound at residue glycine 267–phenylalanine 281.

Belongs to the MnmG family. As to quaternary structure, homodimer. Heterotetramer of two MnmE and two MnmG subunits. The cofactor is FAD.

It localises to the cytoplasm. NAD-binding protein involved in the addition of a carboxymethylaminomethyl (cmnm) group at the wobble position (U34) of certain tRNAs, forming tRNA-cmnm(5)s(2)U34. The sequence is that of tRNA uridine 5-carboxymethylaminomethyl modification enzyme MnmG from Deinococcus radiodurans (strain ATCC 13939 / DSM 20539 / JCM 16871 / CCUG 27074 / LMG 4051 / NBRC 15346 / NCIMB 9279 / VKM B-1422 / R1).